Here is a 236-residue protein sequence, read N- to C-terminus: 2,3,4,5-tetrahydropyridine-2,6-dicarboxylate N-acetyltransferase (236 aa).

The protein belongs to the transferase hexapeptide repeat family. DapH subfamily.

The catalysed reaction is (S)-2,3,4,5-tetrahydrodipicolinate + acetyl-CoA + H2O = L-2-acetamido-6-oxoheptanedioate + CoA. It participates in amino-acid biosynthesis; L-lysine biosynthesis via DAP pathway; LL-2,6-diaminopimelate from (S)-tetrahydrodipicolinate (acetylase route): step 1/3. Its function is as follows. Catalyzes the transfer of an acetyl group from acetyl-CoA to tetrahydrodipicolinate. This Bacillus subtilis (strain 168) protein is 2,3,4,5-tetrahydropyridine-2,6-dicarboxylate N-acetyltransferase.